The chain runs to 160 residues: MFRQSLRSIARTRTGTIGVRTYAEAVNPDVLKVSLVAPHQAIFTNKEVSQVNLPASSGEMGVLANHVPTVEELAPGVVEVIESSGTASKYFVSGGFASILPGSKLSISTVEAHPLDAFSSENIKSLLAEAQKNASSADETVAAEAAIEIEVLEALQAAVH.

The N-terminal 22 residues, 1–22 (MFRQSLRSIARTRTGTIGVRTY), are a transit peptide targeting the mitochondrion.

As to quaternary structure, F-type ATP synthases have 2 components, the catalytic core F(1) and the membrane-embedded component F(0), linked together by a central stalk and a peripheral stalk. The central stalk, also called rotor shaft, is often seen as part of F(1). The peripheral stalk is seen as part of F(0). F(0) contains the membrane channel next to the rotor. F-type ATP synthases form dimers but each monomer functions independently in ATP generation. The dimer consists of 18 different polypeptides: ATP1 (subunit alpha, part of F(1), 3 molecules per monomer), ATP2 (subunit beta, part of F(1), 3 molecules per monomer), ATP3 (subunit gamma, part of the central stalk), ATP4 (subunit b, part of the peripheral stalk), ATP5/OSCP (subunit 5/OSCP, part of the peripheral stalk), ATP6 (subunit a, part of the peripheral stalk), ATP7 (subunit d, part of the peripheral stalk), ATP8 (subunit 8, part of the peripheral stalk), OLI1 (subunit c, part of the rotor, 10 molecules per monomer), ATP14 (subunit h, part of the peripheral stalk), ATP15 (subunit epsilon, part of the central stalk), ATP16 (subunit delta, part of the central stalk), ATP17 (subunit f, part of the peripheral stalk), ATP18 (subunit i/j, part of the peripheral stalk). Dimer-specific subunits are ATP19 (subunit k, at interface between monomers), ATP20 (subunit g, at interface between monomers), TIM11 (subunit e, at interface between monomers). Also contains subunit L.

It is found in the mitochondrion inner membrane. Mitochondrial membrane ATP synthase (F(1)F(0) ATP synthase or Complex V) produces ATP from ADP in the presence of a proton gradient across the membrane which is generated by electron transport complexes of the respiratory chain. F-type ATP synthases consist of two structural domains, F(1) - containing the extramembraneous catalytic core, and F(0) - containing the membrane proton channel, linked together by a central stalk and a peripheral stalk. During catalysis, ATP synthesis in the catalytic domain of F(1) is coupled via a rotary mechanism of the central stalk subunits to proton translocation. Part of the complex F(1) domain and the central stalk which is part of the complex rotary element. Rotation of the central stalk against the surrounding alpha/ATP1(3)beta/ATP2(3) subunits leads to hydrolysis of ATP in three separate catalytic sites on the beta/ATP2 subunits. The polypeptide is ATP synthase subunit delta, mitochondrial (Pichia angusta (Yeast)).